The following is a 137-amino-acid chain: Probable Hsp20 family chaperone (137 aa).

A sHSP domain is found at 25-137 (LTNNNNIMKT…PKEKHYIKLN (113 aa)).

This sequence belongs to the small heat shock protein (HSP20) family.

Probable chaperone. This Onion yellows phytoplasma (strain OY-M) protein is Probable Hsp20 family chaperone.